Consider the following 295-residue polypeptide: Acetyl-coenzyme A carboxylase carboxyl transferase subunit beta (295 aa).

The tract at residues 1–20 (MSWLSKLMPSGIRTENTPAK) is disordered. A CoA carboxyltransferase N-terminal domain is found at 28–295 (LWEKCSNCGS…QPHPQDADAA (268 aa)). Zn(2+)-binding residues include Cys32, Cys35, Cys51, and Cys54. The C4-type zinc finger occupies 32 to 54 (CSNCGSALYGPELEENLEVCPKC).

It belongs to the AccD/PCCB family. Acetyl-CoA carboxylase is a heterohexamer composed of biotin carboxyl carrier protein (AccB), biotin carboxylase (AccC) and two subunits each of ACCase subunit alpha (AccA) and ACCase subunit beta (AccD). Requires Zn(2+) as cofactor.

It localises to the cytoplasm. The catalysed reaction is N(6)-carboxybiotinyl-L-lysyl-[protein] + acetyl-CoA = N(6)-biotinyl-L-lysyl-[protein] + malonyl-CoA. Its pathway is lipid metabolism; malonyl-CoA biosynthesis; malonyl-CoA from acetyl-CoA: step 1/1. Functionally, component of the acetyl coenzyme A carboxylase (ACC) complex. Biotin carboxylase (BC) catalyzes the carboxylation of biotin on its carrier protein (BCCP) and then the CO(2) group is transferred by the transcarboxylase to acetyl-CoA to form malonyl-CoA. This chain is Acetyl-coenzyme A carboxylase carboxyl transferase subunit beta, found in Xanthomonas campestris pv. campestris (strain 8004).